The following is a 276-amino-acid chain: MTRPIWMGDEPPPDRPPTLAGRGRLALRGGAMALVLMAGLTLHLAVRLIERPLHGGHRPWTPAITPVVCRICVAILGLRYSVRGRPMQHIGAVVANHTGWLDIFTLNACQRLYFVSKDEVADWPFIGWLARATGTVFIRRDPREAKAQQALLEDRIRDGHHLLFFPEGTSTDGLQVLPFKTTLFAAFYTHGLDKVMQIQPVTVNYTAPEGEDPRFYGWWRDMPFATHLAKVLSVARQGAAEVVFHPPLDVSDFPSRKDLAAACEAAVRSGMGQRSR.

Residues 25-47 form a helical membrane-spanning segment; the sequence is LALRGGAMALVLMAGLTLHLAVR.

This sequence belongs to the 1-acyl-sn-glycerol-3-phosphate acyltransferase family. OlsA subfamily.

Its subcellular location is the membrane. The catalysed reaction is a lyso-ornithine lipid + a fatty acyl-[ACP] = an N(2)-[(3R)-3-(acyloxy)acyl]-L-ornithine lipid + holo-[ACP]. It catalyses the reaction a fatty acyl-[ACP] + a 1-acyl-sn-glycero-3-phosphate = a 1,2-diacyl-sn-glycero-3-phosphate + holo-[ACP]. Its pathway is lipid metabolism. It participates in phospholipid metabolism. Catalyzes the second step in the formation of ornithine lipids, which are phosphorus-free membrane lipids. Uses acyl-acyl carrier protein (acyl-AcpP) as an acyl donor and converts lyso-ornithine lipid (LOL) into ornithine lipid (OL). It can also act as an alternate acyl-sn-glycerol-3-phosphate acyltransferase (AGPAT) to ensure glycerophospholipid production. The sequence is that of Lyso-ornithine lipid O-acyltransferase from Rhodobacter capsulatus (strain ATCC BAA-309 / NBRC 16581 / SB1003).